Consider the following 753-residue polypeptide: Nigerose phosphorylase (753 aa).

Residue 348–349 (WD) coordinates substrate. Glu490 acts as the Proton donor in catalysis. 604–605 (KQ) provides a ligand contact to substrate.

Belongs to the glycosyl hydrolase 65 family. As to quaternary structure, homodimer.

It is found in the cytoplasm. It catalyses the reaction nigerose + phosphate = beta-D-glucose 1-phosphate + D-glucose. Its activity is regulated as follows. Does not require divalent metal ions. Its function is as follows. Catalyzes the reversible phosphorolysis of nigerose. Also shows a weak activity on kojibiose. In Lachnoclostridium phytofermentans (strain ATCC 700394 / DSM 18823 / ISDg) (Clostridium phytofermentans), this protein is Nigerose phosphorylase.